A 422-amino-acid chain; its full sequence is Protein IQ-DOMAIN 5 (422 aa).

Residues 23–30 (SKKDENVK) carry the Nuclear localization signal motif. IQ domains follow at residues 87–115 (ENRA…GLVR), 116–138 (LQAL…CMQA), and 139–164 (LVRV…TSQQ). A calmodulin-binding region spans residues 137–151 (QALVRVQARVRARRV). The interval 269 to 422 (GENGMEQSEN…NSDPIKQRLA (154 aa)) is disordered. Residues 273-308 (MEQSENVPKTQIKSVSKMPNTSNLVSGVSSQMTGPC) show a composition bias toward polar residues. The span at 310–327 (SDGDSSSPGISSSIPVVS) shows a compositional bias: low complexity. The span at 355–371 (NPKERSREPNRSSKERL) shows a compositional bias: basic and acidic residues. The span at 373 to 387 (LPNSGKSLGSQSTKA) shows a compositional bias: polar residues. A compositionally biased stretch (basic and acidic residues) spans 412-422 (RNSDPIKQRLA).

It belongs to the IQD family. In terms of assembly, binds to multiple calmodulin (CaM) in the presence of Ca(2+) and CaM-like proteins. In terms of tissue distribution, expressed mostly in vegetative tissues including older parts of the root, cotyledons, leaves and shoot apical meristems (SAM). Present at low levels in pollen, siliques and seeds.

It is found in the nucleus. The protein localises to the cytoplasm. The protein resides in the cytoskeleton. Its subcellular location is the spindle. It localises to the phragmoplast. In terms of biological role, may be involved in cooperative interactions with calmodulins or calmodulin-like proteins. Recruits calmodulin (CaM) calcium sensor proteins to cortical microtubule arrays, thus being a potential scaffold in cellular signaling and trafficking. Binds to microtubules (MTs) and promotes MT assembly and dynamics to modulate pavement cell (PC) morphogenesis via cellulose deposition-dependent anisotropic cell expansion triggered by cellulose synthase complexes (CSCs). May associate with nucleic acids and regulate gene expression at the transcriptional or post-transcriptional level. In Arabidopsis thaliana (Mouse-ear cress), this protein is Protein IQ-DOMAIN 5.